The primary structure comprises 504 residues: L-amino-acid oxidase (504 aa).

A signal peptide spans 1–18 (MNIFFMFSLLFLATLGSC). Cysteine 28 and cysteine 191 are joined by a disulfide. Residues 61-62 (MS), 81-82 (EA), arginine 89, and 105-108 (GPMR) contribute to the FAD site. A substrate-binding site is contributed by arginine 108. N-linked (GlcNAc...) asparagine glycosylation is present at asparagine 190. Histidine 241 lines the substrate pocket. Valine 279 contributes to the FAD binding site. A disulfide bridge connects residues cysteine 349 and cysteine 430. N-linked (GlcNAc...) asparagine glycosylation occurs at asparagine 379. Tyrosine 390 lines the substrate pocket. Residues glutamate 475 and 482–487 (GWIDST) contribute to the FAD site. Residue 482 to 483 (GW) participates in substrate binding.

It belongs to the flavin monoamine oxidase family. FIG1 subfamily. As to quaternary structure, homodimer; non-covalently linked. It depends on FAD as a cofactor. As to expression, expressed by the venom gland.

The protein resides in the secreted. It carries out the reaction an L-alpha-amino acid + O2 + H2O = a 2-oxocarboxylate + H2O2 + NH4(+). Catalyzes an oxidative deamination of predominantly hydrophobic and aromatic L-amino acids, thus producing hydrogen peroxide that may contribute to the diverse toxic effects of this enzyme. Exhibits diverse biological activities, such as hemorrhage, hemolysis, edema, apoptosis of vascular endothelial cells or tumor cell lines, antibacterial and antiparasitic activities, as well as regulation of platelet aggregation. Its effect on platelets is controversial, since it either induces aggregation or inhibits agonist-induced aggregation. These different effects are probably due to different experimental conditions. The chain is L-amino-acid oxidase from Echis ocellatus (Ocellated saw-scaled viper).